The following is a 527-amino-acid chain: Probable protein kinase UbiB (527 aa).

Residues 23–43 traverse the membrane as a helical segment; that stretch reads ELLLELPLPFWLRALSWLLPW. In terms of domain architecture, Protein kinase spans 125–488; sequence RFDSQPLASA…ESDARDQWPL (364 aa). Residues 131 to 139 and K153 contribute to the ATP site; that span reads LASASVAQV. The Proton acceptor role is filled by D288. A helical membrane pass occupies residues 504 to 524; it reads LAPLLATWPAWLMVGGGLYLV.

This sequence belongs to the ABC1 family. UbiB subfamily.

It localises to the cell inner membrane. The protein operates within cofactor biosynthesis; ubiquinone biosynthesis [regulation]. In terms of biological role, is probably a protein kinase regulator of UbiI activity which is involved in aerobic coenzyme Q (ubiquinone) biosynthesis. The chain is Probable protein kinase UbiB from Ectopseudomonas mendocina (strain ymp) (Pseudomonas mendocina).